Consider the following 186-residue polypeptide: MARLRRWHCYRKLEVPYTRVSRSKNKNYIPGAKPTMVRLFHMGELTRNPSEWQYEASLVAKENHQIRDNAIEAIRVMVNKYLESTLGKKRYLFIIRKYPHHIYREKPVVGGYAGADRISQGMRLSFGRPKGRAVQIYEGEKLLSIFFDDITKAKDIKYFLQVARSKLPWRYREEIVEVKSGKPLAL.

This sequence belongs to the universal ribosomal protein uL16 family.

In Nanoarchaeum equitans (strain Kin4-M), this protein is Large ribosomal subunit protein uL16.